A 232-amino-acid chain; its full sequence is Large ribosomal subunit protein uL1 (232 aa).

The protein belongs to the universal ribosomal protein uL1 family. In terms of assembly, part of the 50S ribosomal subunit.

Its function is as follows. Binds directly to 23S rRNA. The L1 stalk is quite mobile in the ribosome, and is involved in E site tRNA release. Functionally, protein L1 is also a translational repressor protein, it controls the translation of the L11 operon by binding to its mRNA. The protein is Large ribosomal subunit protein uL1 of Chlamydia pneumoniae (Chlamydophila pneumoniae).